A 243-amino-acid chain; its full sequence is 5'-methylthioadenosine/S-adenosylhomocysteine nucleosidase (243 aa).

Glu-12 acts as the Proton acceptor in catalysis. Substrate is bound by residues Gly-78, Met-158, and 179-180 (ME). The active-site Proton donor is Asp-203.

This sequence belongs to the PNP/UDP phosphorylase family. MtnN subfamily.

It catalyses the reaction S-adenosyl-L-homocysteine + H2O = S-(5-deoxy-D-ribos-5-yl)-L-homocysteine + adenine. It carries out the reaction S-methyl-5'-thioadenosine + H2O = 5-(methylsulfanyl)-D-ribose + adenine. The enzyme catalyses 5'-deoxyadenosine + H2O = 5-deoxy-D-ribose + adenine. It participates in amino-acid biosynthesis; L-methionine biosynthesis via salvage pathway; S-methyl-5-thio-alpha-D-ribose 1-phosphate from S-methyl-5'-thioadenosine (hydrolase route): step 1/2. Catalyzes the irreversible cleavage of the glycosidic bond in both 5'-methylthioadenosine (MTA) and S-adenosylhomocysteine (SAH/AdoHcy) to adenine and the corresponding thioribose, 5'-methylthioribose and S-ribosylhomocysteine, respectively. Also cleaves 5'-deoxyadenosine, a toxic by-product of radical S-adenosylmethionine (SAM) enzymes, into 5-deoxyribose and adenine. This Colwellia psychrerythraea (strain 34H / ATCC BAA-681) (Vibrio psychroerythus) protein is 5'-methylthioadenosine/S-adenosylhomocysteine nucleosidase.